The primary structure comprises 529 residues: Glucose-6-phosphate isomerase (529 aa).

The active-site Proton donor is the Glu-322. Active-site residues include His-351 and Lys-455.

Belongs to the GPI family.

It localises to the cytoplasm. It catalyses the reaction alpha-D-glucose 6-phosphate = beta-D-fructose 6-phosphate. It participates in carbohydrate biosynthesis; gluconeogenesis. The protein operates within carbohydrate degradation; glycolysis; D-glyceraldehyde 3-phosphate and glycerone phosphate from D-glucose: step 2/4. Functionally, catalyzes the reversible isomerization of glucose-6-phosphate to fructose-6-phosphate. The polypeptide is Glucose-6-phosphate isomerase (Cyanothece sp. (strain PCC 7425 / ATCC 29141)).